Reading from the N-terminus, the 668-residue chain is tRNA 5-methylaminomethyl-2-thiouridine biosynthesis bifunctional protein MnmC (668 aa).

The interval Met1–Glu245 is tRNA (mnm(5)s(2)U34)-methyltransferase. The interval Ile270–Gly668 is FAD-dependent cmnm(5)s(2)U34 oxidoreductase.

This sequence in the N-terminal section; belongs to the methyltransferase superfamily. tRNA (mnm(5)s(2)U34)-methyltransferase family. The protein in the C-terminal section; belongs to the DAO family. It depends on FAD as a cofactor.

The protein localises to the cytoplasm. It carries out the reaction 5-aminomethyl-2-thiouridine(34) in tRNA + S-adenosyl-L-methionine = 5-methylaminomethyl-2-thiouridine(34) in tRNA + S-adenosyl-L-homocysteine + H(+). Functionally, catalyzes the last two steps in the biosynthesis of 5-methylaminomethyl-2-thiouridine (mnm(5)s(2)U) at the wobble position (U34) in tRNA. Catalyzes the FAD-dependent demodification of cmnm(5)s(2)U34 to nm(5)s(2)U34, followed by the transfer of a methyl group from S-adenosyl-L-methionine to nm(5)s(2)U34, to form mnm(5)s(2)U34. This chain is tRNA 5-methylaminomethyl-2-thiouridine biosynthesis bifunctional protein MnmC, found in Escherichia coli O6:H1 (strain CFT073 / ATCC 700928 / UPEC).